The following is a 131-amino-acid chain: MSTKTNEILDILKSITLLEAAELVSQIEETFGVDASAPVGGGFMAAPGGAGTAAAEIVEEKTTFDVIIEDVASDKRVPVLKVVRNLTSLDLKEAKEAITSLPKVIQQGVSKDDAEASKKQLEDAGAKVKIS.

The interval 107-131 (QGVSKDDAEASKKQLEDAGAKVKIS) is disordered. Residues 110–131 (SKDDAEASKKQLEDAGAKVKIS) show a composition bias toward basic and acidic residues.

It belongs to the bacterial ribosomal protein bL12 family. In terms of assembly, homodimer. Part of the ribosomal stalk of the 50S ribosomal subunit. Forms a multimeric L10(L12)X complex, where L10 forms an elongated spine to which 2 to 4 L12 dimers bind in a sequential fashion. Binds GTP-bound translation factors.

The protein resides in the plastid. It is found in the chloroplast. Forms part of the ribosomal stalk which helps the ribosome interact with GTP-bound translation factors. Is thus essential for accurate translation. This chain is Large ribosomal subunit protein bL12c, found in Chlorella vulgaris (Green alga).